The chain runs to 371 residues: 4-hydroxybutyrate dehydrogenase (371 aa).

Residues 88–92 (GSVID), 126–130 (TTCGT), and Lys148 contribute to the NAD(+) site. Positions 182, 186, 253, and 267 each coordinate Fe cation. His267 contributes to the NAD(+) binding site.

The protein belongs to the iron-containing alcohol dehydrogenase family. Homodimer. Fe(2+) is required as a cofactor. The cofactor is Cu(2+).

It carries out the reaction 4-hydroxybutanoate + NAD(+) = succinate semialdehyde + NADH + H(+). With respect to regulation, inactivated by oxygen. Involved in the anaerobic succinate degradation pathway. Catalyzes the interconversion of gamma-hydroxybutyrate (GHB) and succinic semialdehyde (SSA). This is 4-hydroxybutyrate dehydrogenase from Clostridium kluyveri (strain ATCC 8527 / DSM 555 / NBRC 12016 / NCIMB 10680 / K1).